The sequence spans 657 residues: Glycogen debranching enzyme (657 aa).

Catalysis depends on D334, which acts as the Nucleophile. The Proton donor role is filled by E369. Residues 458–485 are disordered; the sequence is ANGEQNRDGTNSNFSFNHGTEGLEADET. The segment covering 465–475 has biased composition (polar residues); it reads DGTNSNFSFNH.

The protein belongs to the glycosyl hydrolase 13 family.

The protein resides in the cytoplasm. The enzyme catalyses Hydrolysis of (1-&gt;6)-alpha-D-glucosidic linkages to branches with degrees of polymerization of three or four glucose residues in limit dextrin.. The protein operates within glycan degradation; glycogen degradation. Its activity is regulated as follows. Slightly activated by Ca(2+). Inhibited by divalent cations such as Zn(2+), Cu(2+), Fe(2+), Mg(2+), Mn(2+), but only slightly inhibited by EDTA. Functionally, removes maltotriose and maltotetraose chains that are attached by 1,6-alpha-linkage to the limit dextrin main chain, generating a debranched limit dextrin. Hydrolyzes the alpha-1,6-glycosidic linkages in amylopectin while does not hydrolyze the alpha-1,4-glycosidic linkages in amylose. Native glycogen is a poor substrate. This is Glycogen debranching enzyme from Dickeya chrysanthemi (Pectobacterium chrysanthemi).